A 115-amino-acid chain; its full sequence is NADH-ubiquinone oxidoreductase chain 3 (115 aa).

3 helical membrane-spanning segments follow: residues 3–23 (LVMALLTNTALASLLVLIAFW), 55–75 (FFLVAITFLLFDLEVALLLPL), and 86–106 (TMLIMALTLISLLAISLAYEW).

It belongs to the complex I subunit 3 family. In terms of assembly, core subunit of respiratory chain NADH dehydrogenase (Complex I) which is composed of 45 different subunits. Interacts with TMEM186. Interacts with TMEM242.

It is found in the mitochondrion inner membrane. The catalysed reaction is a ubiquinone + NADH + 5 H(+)(in) = a ubiquinol + NAD(+) + 4 H(+)(out). Core subunit of the mitochondrial membrane respiratory chain NADH dehydrogenase (Complex I) which catalyzes electron transfer from NADH through the respiratory chain, using ubiquinone as an electron acceptor. Essential for the catalytic activity of complex I. This chain is NADH-ubiquinone oxidoreductase chain 3, found in Hippopotamus amphibius (Hippopotamus).